The primary structure comprises 76 residues: MRTVSIFKNGNNRAIRLPRDLDFEGVSELEIVREGDSIILRPVRPTWGSFAQLEKADPDFMAEREDVVSDEGRFEL.

The SpoVT-AbrB domain maps to 4 to 45 (VSIFKNGNNRAIRLPRDLDFEGVSELEIVREGDSIILRPVRP).

The protein belongs to the VapB family.

This chain is Virulence-associated protein VagC (vagC), found in Salmonella dublin.